An 89-amino-acid polypeptide reads, in one-letter code: Small ribosomal subunit protein uS15 (89 aa).

The protein belongs to the universal ribosomal protein uS15 family. As to quaternary structure, part of the 30S ribosomal subunit. Forms a bridge to the 50S subunit in the 70S ribosome, contacting the 23S rRNA.

Functionally, one of the primary rRNA binding proteins, it binds directly to 16S rRNA where it helps nucleate assembly of the platform of the 30S subunit by binding and bridging several RNA helices of the 16S rRNA. Forms an intersubunit bridge (bridge B4) with the 23S rRNA of the 50S subunit in the ribosome. The chain is Small ribosomal subunit protein uS15 from Bifidobacterium animalis subsp. lactis (strain AD011).